We begin with the raw amino-acid sequence, 264 residues long: Thymidylate synthase (264 aa).

Residues R21 and 126–127 (RR) contribute to the dUMP site. The active-site Nucleophile is C146. DUMP is bound by residues 166–169 (RSAD), N177, and 207–209 (HLY). D169 is a (6R)-5,10-methylene-5,6,7,8-tetrahydrofolate binding site. A263 provides a ligand contact to (6R)-5,10-methylene-5,6,7,8-tetrahydrofolate.

It belongs to the thymidylate synthase family. Bacterial-type ThyA subfamily. Homodimer.

It localises to the cytoplasm. The enzyme catalyses dUMP + (6R)-5,10-methylene-5,6,7,8-tetrahydrofolate = 7,8-dihydrofolate + dTMP. Its pathway is pyrimidine metabolism; dTTP biosynthesis. Its function is as follows. Catalyzes the reductive methylation of 2'-deoxyuridine-5'-monophosphate (dUMP) to 2'-deoxythymidine-5'-monophosphate (dTMP) while utilizing 5,10-methylenetetrahydrofolate (mTHF) as the methyl donor and reductant in the reaction, yielding dihydrofolate (DHF) as a by-product. This enzymatic reaction provides an intracellular de novo source of dTMP, an essential precursor for DNA biosynthesis. This is Thymidylate synthase from Rhodopseudomonas palustris (strain BisB5).